The sequence spans 284 residues: RAD52 motif-containing protein 1 (284 aa).

The necessary for nuclear localization and for nucleolar accumulation in response to heat shock stretch occupies residues 1-92 (MAELVPFAVP…KQLFQKSPVK (92 aa)). The region spanning 15-98 (KTLLVWELSS…SPVKVRLGTR (84 aa)) is the RRM domain. Residues 90-133 (PVKVRLGTRHKAVQHQALALNSSKCQELANYYFGFNGCSKRIIK) are necessary for nuclear and nucleolar localization.

Homodimer. As to expression, expressed in testis.

It is found in the nucleus. It localises to the cytoplasm. The protein localises to the nucleolus. Its subcellular location is the PML body. The protein resides in the cajal body. Functionally, may confer resistance to the antitumor agent cisplatin. Binds to DNA and RNA. This Homo sapiens (Human) protein is RAD52 motif-containing protein 1 (RDM1).